Consider the following 311-residue polypeptide: tRNA dimethylallyltransferase (311 aa).

12–19 is an ATP binding site; that stretch reads GPTASGKT. 14 to 19 serves as a coordination point for substrate; that stretch reads TASGKT. Interaction with substrate tRNA stretches follow at residues 37–40, 161–165, and 241–246; these read DSAL, QRINR, and RCVGYR.

It belongs to the IPP transferase family. As to quaternary structure, monomer. Requires Mg(2+) as cofactor.

The enzyme catalyses adenosine(37) in tRNA + dimethylallyl diphosphate = N(6)-dimethylallyladenosine(37) in tRNA + diphosphate. In terms of biological role, catalyzes the transfer of a dimethylallyl group onto the adenine at position 37 in tRNAs that read codons beginning with uridine, leading to the formation of N6-(dimethylallyl)adenosine (i(6)A). The polypeptide is tRNA dimethylallyltransferase (Histophilus somni (strain 129Pt) (Haemophilus somnus)).